Here is a 762-residue protein sequence, read N- to C-terminus: Hyperosmolality-gated Ca2+ permeable channel 2.2 (762 aa).

10 helical membrane-spanning segments follow: residues 3 to 23, 90 to 110, 144 to 164, 354 to 374, 402 to 422, 445 to 465, 500 to 520, 557 to 577, 594 to 614, and 615 to 635; these read VSAL…LVSL, MVIC…AFVL, LWVH…LLYF, IATL…VTFV, VITG…VPPL, KILY…GSVI, GWAG…NLIA, VIAP…YLIY, QYWP…QVIA, and LGFF…PLIL.

It belongs to the CSC1 (TC 1.A.17) family.

The protein resides in the membrane. Acts as an osmosensitive calcium-permeable cation channel. This is Hyperosmolality-gated Ca2+ permeable channel 2.2 from Arabidopsis thaliana (Mouse-ear cress).